The chain runs to 235 residues: Small ribosomal subunit protein uS3 (235 aa).

In terms of domain architecture, KH type-2 spans 39 to 107 (IREILHKELK…DVVINIVEIR (69 aa)). The interval 215-235 (QDKRMAEGDGGGSSRPRRDAA) is disordered.

Belongs to the universal ribosomal protein uS3 family. As to quaternary structure, part of the 30S ribosomal subunit. Forms a tight complex with proteins S10 and S14.

In terms of biological role, binds the lower part of the 30S subunit head. Binds mRNA in the 70S ribosome, positioning it for translation. This is Small ribosomal subunit protein uS3 from Rhodopseudomonas palustris (strain ATCC BAA-98 / CGA009).